Here is an 89-residue protein sequence, read N- to C-terminus: MANTPGAKKAVRKIARRTEVNTARRSRVRTFLRKFEEALASGDAGAAKAAFVQAQSELMRAVSKGVVHKNTGARKVSRLAARLKKLSAA.

This sequence belongs to the bacterial ribosomal protein bS20 family.

Functionally, binds directly to 16S ribosomal RNA. The chain is Small ribosomal subunit protein bS20 from Phenylobacterium zucineum (strain HLK1).